We begin with the raw amino-acid sequence, 1087 residues long: MMTSVGTNRARGNWEQPQNQNQTQHKQRPQATAEQIRLAQMISDHNDADFEEKVKQLIDITGKNQDECVIALHDCNGDVNRAINVLLEGNPDTHSWEMVGKKKGVSGQKDGGQTESNEEGKENRDRDRDYSRRRGGPPRRGRGASRGREFRGQENGLDGTKSGGPSGRGTERGRRGRGRGRGGSGRRGGRFSAQGMGTFNPADYAEPANTDDNYGNSSGNTWNNTGHFEPDDGTSAWRTATEEWGTEDWNEDLSETKIFTASNVSSVPLPAENVTITAGQRIDLAVLLGKTPSTMENDSSNLDPSQAPSLAQPLVFSNSKQTAISQPASGNTFSHHSMVSMLGKGFGDVGEAKGGSTTGSQFLEQFKTAQALAQLAAQHSQSGSTTTSSWDMGSTTQSPSLVQYDLKNPSDSAVHSPFTKRQAFTPSSTMMEVFLQEKSPAVATSTAAPPPPSSPLPSKSTSAPQMSPGSSDNQSSSPQPAQQKLKQQKKKASLTSKIPALAVEMPGSADISGLNLQFGALQFGSEPVLSDYESTPTTSASSSQAPSSLYTSTASESSSTISSNQSQESGYQSGPIQSTTYTSQNNAQGPLYEQRSTQTRRYPSSISSSPQKDLTQAKNGFSSVQATQLQTTQSVEGATGSAVKSDSPSTSSIPPLNETVSAASLLTTTNQHSSSLGGLSHSEEIPNTTTTQHSSTLSTQQNTLSSSTSSGRTSTSTLLHTSVESEANLHSSSSTFSTTSSTVSAPPPVVSVSSSLNSGSSLGLSLGSNSTVTASTRSSVATTSGKAPPNLPPGVPPLLPNPYIMAPGLLHAYPPQVYGYDDLQMLQTRFPLDYYSIPFPTPTTPLTGRDGSLASNPYSGDLTKFGRGDASSPAPATTLAQPQQNQTQTHHTTQQTFLNPALPPGYSYTSLPYYTGVPGLPSTFQYGPAVFPVAPTSSKQHGVNVSVNASATPFQQPSGYGSHGYNTGVSVTSSNTGVPDISGSVYSKTQQSFEKQGFHSGTPAASFNLPSALGSGGPINPATAAAYPPAPFMHILTPHQQPHSQILHHHLQQDGQTGSGQRSQTSSIPQKPQTNKSAYNSYSWGAN.

N-acetylmethionine is present on methionine 1. A disordered region spans residues 1–33 (MMTSVGTNRARGNWEQPQNQNQTQHKQRPQATA). In terms of domain architecture, UBA spans 49–89 (DFEEKVKQLIDITGKNQDECVIALHDCNGDVNRAINVLLEG). Residues 92–234 (DTHSWEMVGK…TGHFEPDDGT (143 aa)) form a disordered region. Positions 118–132 (EEGKENRDRDRDYSR) are enriched in basic and acidic residues. The span at 133-145 (RRGGPPRRGRGAS) shows a compositional bias: basic residues. Asymmetric dimethylarginine occurs at positions 187 and 190. A compositionally biased stretch (low complexity) spans 213–226 (NYGNSSGNTWNNTG). Phosphoserine occurs at positions 356 and 360. The span at 377-389 (AQHSQSGSTTTSS) shows a compositional bias: low complexity. The tract at residues 377–420 (AQHSQSGSTTTSSWDMGSTTQSPSLVQYDLKNPSDSAVHSPFTK) is disordered. Over residues 390–401 (WDMGSTTQSPSL) the composition is skewed to polar residues. A phosphoserine mark is found at serine 410 and serine 416. Threonine 425 is modified (phosphothreonine). Phosphoserine is present on residues serine 439, serine 454, serine 467, serine 470, serine 471, and serine 477. Disordered stretches follow at residues 440–493 (PAVA…KKAS), 530–656 (SDYE…IPPL), and 669–794 (TNQH…LPPG). 2 stretches are compositionally biased toward low complexity: residues 474–485 (QSSSPQPAQQKL) and 534–569 (STPT…SQES). Polar residues predominate over residues 570 to 656 (GYQSGPIQST…SPSTSSIPPL (87 aa)). Residues serine 604, serine 605, serine 608, and serine 609 each carry the phosphoserine modification. Low complexity predominate over residues 688-784 (TTTTQHSSTL…STRSSVATTS (97 aa)). Phosphoserine occurs at positions 852 and 859. The disordered stretch occupies residues 865-901 (FGRGDASSPAPATTLAQPQQNQTQTHHTTQQTFLNPA). The segment covering 873–896 (PAPATTLAQPQQNQTQTHHTTQQT) has biased composition (low complexity). Omega-N-methylarginine occurs at positions 962 and 969. Valine 969 and threonine 976 each carry N6-acetyllysine. The tract at residues 1040–1087 (QQPHSQILHHHLQQDGQTGSGQRSQTSSIPQKPQTNKSAYNSYSWGAN) is disordered. The span at 1053-1067 (QDGQTGSGQRSQTSS) shows a compositional bias: low complexity. The span at 1068 to 1087 (IPQKPQTNKSAYNSYSWGAN) shows a compositional bias: polar residues.

Interacts with BMI1. Part of a complex consisting of UBAP2L, BMI1 and RNF2. Interacts with G3BP1 (via NTF2 domain); promoting stress granule formation. Post-translationally, acetylated. Ubiquitous.

Its subcellular location is the nucleus. It localises to the chromosome. The protein resides in the cytoplasm. It is found in the stress granule. Functionally, recruits the ubiquitination machinery to RNA polymerase II for polyubiquitination, removal and degradation, when the transcription-coupled nucleotide excision repair (TC-NER) machinery fails to resolve DNA damage. Plays an important role in the activity of long-term repopulating hematopoietic stem cells (LT-HSCs). Is a regulator of stress granule assembly, required for their efficient formation. Required for proper brain development and neocortex lamination. This is Ubiquitin-associated protein 2-like from Homo sapiens (Human).